Reading from the N-terminus, the 127-residue chain is uncharacterized protein (127 aa).

The stretch at 71–126 forms a coiled coil; it reads FYLREYRRIRRRIKELKNRAKYISKGEIAYNPKIMKEVEALKEKLSEIEKKIEELK.

This is an uncharacterized protein from Aquifex aeolicus (strain VF5).